A 466-amino-acid chain; its full sequence is MENKKENFSEWYNEIIDLAKLSDKRYAIKGMNVWLPYGLKIMRLIDNIIRDNVDNKSFQEVSFPVLITRSQLETEFEHIKGFENEIYWVTKGGSEKLDIELALRPTSESAMYTMFPLWIRSHQDLPLKIYQIVSVYRYETKHTRSFIRVREIHFFEAHTAHVDYGDAERQMSEYMDIWSSIAEKLCLPYNIDMRPDWDKFPGAKYTLAFDTLMPSGRSLQIGTIHEYGENFARNYDIKYLDINGDLKYVSQTTFGLSERLLAAVIGIHGDDTGLILPASIAPVQAIIIPIPGKSFKEVLDYSGKILSMLKDINVRAEIDSRENYTPGYKYNDWEMRGVPLRIEIGSREMESSTVTVVSRLNKKRLNISIKEINNIKNMLNEHDKQLTLNAWKMMEENTVFIDDINNIPMNKDVLIKAYWCGSRECSDALEQKKDVTALGTLYNLNDSGKCIVCGNPGRLSMFARSY.

It belongs to the class-II aminoacyl-tRNA synthetase family. ProS type 3 subfamily. In terms of assembly, homodimer.

The protein resides in the cytoplasm. The catalysed reaction is tRNA(Pro) + L-proline + ATP = L-prolyl-tRNA(Pro) + AMP + diphosphate. Its function is as follows. Catalyzes the attachment of proline to tRNA(Pro) in a two-step reaction: proline is first activated by ATP to form Pro-AMP and then transferred to the acceptor end of tRNA(Pro). The chain is Proline--tRNA ligase from Picrophilus torridus (strain ATCC 700027 / DSM 9790 / JCM 10055 / NBRC 100828 / KAW 2/3).